The chain runs to 344 residues: Phosphoribosylformylglycinamidine cyclo-ligase (344 aa).

Belongs to the AIR synthase family.

It localises to the cytoplasm. The catalysed reaction is 2-formamido-N(1)-(5-O-phospho-beta-D-ribosyl)acetamidine + ATP = 5-amino-1-(5-phospho-beta-D-ribosyl)imidazole + ADP + phosphate + H(+). The protein operates within purine metabolism; IMP biosynthesis via de novo pathway; 5-amino-1-(5-phospho-D-ribosyl)imidazole from N(2)-formyl-N(1)-(5-phospho-D-ribosyl)glycinamide: step 2/2. The chain is Phosphoribosylformylglycinamidine cyclo-ligase from Exiguobacterium sibiricum (strain DSM 17290 / CCUG 55495 / CIP 109462 / JCM 13490 / 255-15).